Consider the following 180-residue polypeptide: Ribosome maturation factor RimM (180 aa).

A PRC barrel domain is found at 99–179 (NNEYYWKDIV…IVIKNWKQTF (81 aa)).

It belongs to the RimM family. As to quaternary structure, binds ribosomal protein uS19.

The protein localises to the cytoplasm. Its function is as follows. An accessory protein needed during the final step in the assembly of 30S ribosomal subunit, possibly for assembly of the head region. Essential for efficient processing of 16S rRNA. May be needed both before and after RbfA during the maturation of 16S rRNA. It has affinity for free ribosomal 30S subunits but not for 70S ribosomes. The protein is Ribosome maturation factor RimM of Buchnera aphidicola subsp. Baizongia pistaciae (strain Bp).